Here is a 210-residue protein sequence, read N- to C-terminus: Neurotrophin-4 (210 aa).

The first 24 residues, 1 to 24 (MLPLPSCSLPILLLFLLPSVPIES), serve as a signal peptide directing secretion. A propeptide spanning residues 25–80 (QPPPSTLPPFLAPEWDLLSPRVVLSRGAPAGPPLLFLLEAGAFRESAGAPANRSRR) is cleaved from the precursor. A glycan (N-linked (GlcNAc...) asparagine) is linked at Asn-76. 3 cysteine pairs are disulfide-bonded: Cys-97/Cys-170, Cys-141/Cys-199, and Cys-158/Cys-201.

The protein belongs to the NGF-beta family. In terms of tissue distribution, highest levels in prostate, lower levels in thymus, placenta, and skeletal muscle. Expressed in embryonic and adult tissues.

The protein resides in the secreted. Functionally, target-derived survival factor for peripheral sensory sympathetic neurons. May promote ameloblast differentiation and subsequent reduction in proliferation of ameloblasts. The polypeptide is Neurotrophin-4 (NTF4) (Homo sapiens (Human)).